The sequence spans 714 residues: Phosphate acetyltransferase (714 aa).

The tract at residues 390 to 714 (AFRYQLTELA…TAIQASQQQQ (325 aa)) is phosphate acetyltransferase.

It in the N-terminal section; belongs to the CobB/CobQ family. This sequence in the C-terminal section; belongs to the phosphate acetyltransferase and butyryltransferase family. Homohexamer.

It is found in the cytoplasm. The enzyme catalyses acetyl-CoA + phosphate = acetyl phosphate + CoA. It catalyses the reaction propanoyl-CoA + phosphate = propanoyl phosphate + CoA. It functions in the pathway metabolic intermediate biosynthesis; acetyl-CoA biosynthesis; acetyl-CoA from acetate: step 2/2. Allosterically inhibited by NADH. Its function is as follows. Involved in acetate metabolism. Catalyzes the reversible interconversion of acetyl-CoA and acetyl phosphate. The direction of the overall reaction changes depending on growth conditions. Required for acetate recapture but not for acetate excretion when this organism is grown on ethanolamine (EA); is unable to complement an eutD deletion during growth on EA. Works with proprionate kinase PduW to capture exogenous propionate and regenerate propionyl-CoA during degradation of propionate and 1,2-propanediol (1,2-PD). In Salmonella typhimurium (strain LT2 / SGSC1412 / ATCC 700720), this protein is Phosphate acetyltransferase (pta).